Here is a 222-residue protein sequence, read N- to C-terminus: Large ribosomal subunit protein uL4 (222 aa).

The protein belongs to the universal ribosomal protein uL4 family. Part of the 50S ribosomal subunit.

Its function is as follows. One of the primary rRNA binding proteins, this protein initially binds near the 5'-end of the 23S rRNA. It is important during the early stages of 50S assembly. It makes multiple contacts with different domains of the 23S rRNA in the assembled 50S subunit and ribosome. Functionally, forms part of the polypeptide exit tunnel. The chain is Large ribosomal subunit protein uL4 from Acidobacterium capsulatum (strain ATCC 51196 / DSM 11244 / BCRC 80197 / JCM 7670 / NBRC 15755 / NCIMB 13165 / 161).